Here is a 60-residue protein sequence, read N- to C-terminus: uncharacterized protein (60 aa).

This is an uncharacterized protein from Ureaplasma parvum serovar 3 (strain ATCC 700970).